Here is a 242-residue protein sequence, read N- to C-terminus: MSKTILIADDEPEIIELLKLFLERESYRIIEAYDGEQAWNYIRQHPVDLAIIDIMMPALDGFQLIKRLTNEYKLPVIILSAKNRDSDKILGLGLGADDFISKPFNPLEAVARIQAQLRRAFEFNEPEEKAISTQSTTVGRLTLLHTACVVYRGDETYSVTPLEYRLLNTFMQCSRTSIFTKQQLFEQAWSETYWEDDNTIMVQISRLRDKIEDQPRQPVYIKTVRGLGYKFASKDDFDEEKT.

Residues 4–117 (TILIADDEPE…EAVARIQAQL (114 aa)) form the Response regulatory domain. D53 carries the 4-aspartylphosphate modification. Residues 133–233 (TQSTTVGRLT…VRGLGYKFAS (101 aa)) constitute a DNA-binding region (ompR/PhoB-type).

Phosphorylated by GtcS.

Its function is as follows. Member of the two-component regulatory system GtcS/GtcR which may act in the control of the transcription of the grs operon which encodes the multienzymes involved in the biosynthesis of the peptide antibiotic gramicidin S. In Aneurinibacillus migulanus (Bacillus migulanus), this protein is Response regulator GtcR (gtcR).